We begin with the raw amino-acid sequence, 84 residues long: Putative antitoxin VapB37 (84 aa).

Probable antitoxin component of a type II toxin-antitoxin (TA) system. Its putative cognate toxin is VapC37. The sequence is that of Putative antitoxin VapB37 (vapB37) from Mycobacterium tuberculosis (strain CDC 1551 / Oshkosh).